We begin with the raw amino-acid sequence, 336 residues long: Type II methyltransferase M2.HphI (336 aa).

It belongs to the N(4)/N(6)-methyltransferase family.

The enzyme catalyses a 2'-deoxyadenosine in DNA + S-adenosyl-L-methionine = an N(6)-methyl-2'-deoxyadenosine in DNA + S-adenosyl-L-homocysteine + H(+). Its function is as follows. An alpha subtype methylase that recognizes the double-stranded sequence 5'-GGTGA-3', probably methylates A-5 on the top strand, and protects the DNA from cleavage by the HphI endonuclease. The polypeptide is Type II methyltransferase M2.HphI (hphIBM) (Haemophilus parahaemolyticus).